Reading from the N-terminus, the 339-residue chain is Glyceraldehyde-3-phosphate dehydrogenase (339 aa).

Residues 12–13 (RI), D34, and K79 each bind NAD(+). Residues 150–152 (SCT), T181, 210–211 (TG), and R233 each bind D-glyceraldehyde 3-phosphate. C151 (nucleophile) is an active-site residue. N316 is a binding site for NAD(+).

This sequence belongs to the glyceraldehyde-3-phosphate dehydrogenase family. In terms of assembly, homotetramer.

The protein localises to the cytoplasm. The enzyme catalyses D-glyceraldehyde 3-phosphate + phosphate + NAD(+) = (2R)-3-phospho-glyceroyl phosphate + NADH + H(+). It functions in the pathway carbohydrate degradation; glycolysis; pyruvate from D-glyceraldehyde 3-phosphate: step 1/5. The protein is Glyceraldehyde-3-phosphate dehydrogenase (GPD) of Cryptococcus neoformans var. neoformans serotype D (strain B-3501A) (Filobasidiella neoformans).